A 72-amino-acid polypeptide reads, in one-letter code: Small ribosomal subunit protein bS18 (72 aa).

The protein belongs to the bacterial ribosomal protein bS18 family. Part of the 30S ribosomal subunit. Forms a tight heterodimer with protein bS6.

Functionally, binds as a heterodimer with protein bS6 to the central domain of the 16S rRNA, where it helps stabilize the platform of the 30S subunit. The polypeptide is Small ribosomal subunit protein bS18 (Francisella tularensis subsp. holarctica (strain OSU18)).